Reading from the N-terminus, the 246-residue chain is Probable transcriptional regulatory protein COSY_0365 (246 aa).

The protein belongs to the TACO1 family.

It is found in the cytoplasm. This chain is Probable transcriptional regulatory protein COSY_0365, found in Vesicomyosocius okutanii subsp. Calyptogena okutanii (strain HA).